Consider the following 204-residue polypeptide: Ribonuclease HII (204 aa).

One can recognise an RNase H type-2 domain in the interval 14–204 (QYICGVDEVG…SFKLSCLGEK (191 aa)). A divalent metal cation-binding residues include Asp20, Glu21, and Asp116.

Belongs to the RNase HII family. Mn(2+) serves as cofactor. The cofactor is Mg(2+).

It localises to the cytoplasm. It catalyses the reaction Endonucleolytic cleavage to 5'-phosphomonoester.. Functionally, endonuclease that specifically degrades the RNA of RNA-DNA hybrids. This Chloroherpeton thalassium (strain ATCC 35110 / GB-78) protein is Ribonuclease HII.